The chain runs to 574 residues: Putative DNA-directed RNA polymerase subunit alpha-like 1 (574 aa).

The alpha N-terminal domain (alpha-NTD) stretch occupies residues 1-352 (MTNNKNFADW…ELFSLFLQTS (352 aa)). The alpha C-terminal domain (alpha-CTD) stretch occupies residues 419 to 574 (PDYDRYNSIT…RERKRGNREF (156 aa)). A disordered region spans residues 534–574 (QETLRKEQDEQSSQQQKDQMEKRRWERQNRERERKRGNREF). A compositionally biased stretch (basic and acidic residues) spans 551–574 (DQMEKRRWERQNRERERKRGNREF).

The protein belongs to the RNA polymerase alpha chain family. As to quaternary structure, in plastids the minimal PEP RNA polymerase catalytic core is composed of four subunits: alpha, beta, beta', and beta''. When a (nuclear-encoded) sigma factor is associated with the core the holoenzyme is formed, which can initiate transcription.

It is found in the plastid. Its subcellular location is the chloroplast. The enzyme catalyses RNA(n) + a ribonucleoside 5'-triphosphate = RNA(n+1) + diphosphate. Its function is as follows. DNA-dependent RNA polymerase catalyzes the transcription of DNA into RNA using the four ribonucleoside triphosphates as substrates. This Pelargonium hortorum (Common geranium) protein is Putative DNA-directed RNA polymerase subunit alpha-like 1 (rpoAL1-A).